Reading from the N-terminus, the 493-residue chain is Ribose import ATP-binding protein RbsA (493 aa).

2 consecutive ABC transporter domains span residues 3–239 and 252–493; these read IKMK…VGRE and GRVV…TGGR. An ATP-binding site is contributed by 35–42; sequence GENGAGKS.

The protein belongs to the ABC transporter superfamily. Ribose importer (TC 3.A.1.2.1) family. In terms of assembly, the complex is composed of an ATP-binding protein (RbsA), two transmembrane proteins (RbsC) and a solute-binding protein (RbsB).

It localises to the cell membrane. It carries out the reaction D-ribose(out) + ATP + H2O = D-ribose(in) + ADP + phosphate + H(+). Its function is as follows. Part of the ABC transporter complex RbsABC involved in ribose import. Responsible for energy coupling to the transport system. This chain is Ribose import ATP-binding protein RbsA, found in Bacillus licheniformis (strain ATCC 14580 / DSM 13 / JCM 2505 / CCUG 7422 / NBRC 12200 / NCIMB 9375 / NCTC 10341 / NRRL NRS-1264 / Gibson 46).